Consider the following 436-residue polypeptide: UDP-N-acetylmuramate--L-alanine ligase (436 aa).

108–114 (GAHGKTS) contacts ATP.

This sequence belongs to the MurCDEF family.

The protein resides in the cytoplasm. It catalyses the reaction UDP-N-acetyl-alpha-D-muramate + L-alanine + ATP = UDP-N-acetyl-alpha-D-muramoyl-L-alanine + ADP + phosphate + H(+). Its pathway is cell wall biogenesis; peptidoglycan biosynthesis. Its function is as follows. Cell wall formation. This Bacillus cytotoxicus (strain DSM 22905 / CIP 110041 / 391-98 / NVH 391-98) protein is UDP-N-acetylmuramate--L-alanine ligase.